Consider the following 123-residue polypeptide: Putative membrane protein insertion efficiency factor (123 aa).

The protein belongs to the UPF0161 family.

The protein resides in the cell inner membrane. Could be involved in insertion of integral membrane proteins into the membrane. The chain is Putative membrane protein insertion efficiency factor from Beijerinckia indica subsp. indica (strain ATCC 9039 / DSM 1715 / NCIMB 8712).